The sequence spans 610 residues: Elongation factor 4 (610 aa).

The 183-residue stretch at 11-193 (ENIRNFSIIA…QIVEKVPAPS (183 aa)) folds into the tr-type G domain. GTP is bound by residues 23-28 (DHGKST) and 140-143 (NKID).

Belongs to the TRAFAC class translation factor GTPase superfamily. Classic translation factor GTPase family. LepA subfamily.

The protein localises to the cell membrane. It catalyses the reaction GTP + H2O = GDP + phosphate + H(+). In terms of biological role, required for accurate and efficient protein synthesis under certain stress conditions. May act as a fidelity factor of the translation reaction, by catalyzing a one-codon backward translocation of tRNAs on improperly translocated ribosomes. Back-translocation proceeds from a post-translocation (POST) complex to a pre-translocation (PRE) complex, thus giving elongation factor G a second chance to translocate the tRNAs correctly. Binds to ribosomes in a GTP-dependent manner. This chain is Elongation factor 4, found in Streptococcus equi subsp. zooepidemicus (strain MGCS10565).